Here is a 258-residue protein sequence, read N- to C-terminus: 5-oxoprolinase subunit A (258 aa).

It belongs to the LamB/PxpA family. In terms of assembly, forms a complex composed of PxpA, PxpB and PxpC.

It catalyses the reaction 5-oxo-L-proline + ATP + 2 H2O = L-glutamate + ADP + phosphate + H(+). Catalyzes the cleavage of 5-oxoproline to form L-glutamate coupled to the hydrolysis of ATP to ADP and inorganic phosphate. This chain is 5-oxoprolinase subunit A, found in Deinococcus radiodurans (strain ATCC 13939 / DSM 20539 / JCM 16871 / CCUG 27074 / LMG 4051 / NBRC 15346 / NCIMB 9279 / VKM B-1422 / R1).